A 489-amino-acid polypeptide reads, in one-letter code: Bifunctional protein HldE (489 aa).

The ribokinase stretch occupies residues 1-330 (MFDFDGLSNA…RKILPPAFLA (330 aa)). 205-208 (NRKE) contacts ATP. The active site involves D275. Residues 358–489 (FTNGCFDILH…SLVKRAGGRA (132 aa)) form a cytidylyltransferase region.

The protein in the N-terminal section; belongs to the carbohydrate kinase PfkB family. This sequence in the C-terminal section; belongs to the cytidylyltransferase family. In terms of assembly, homodimer.

The enzyme catalyses D-glycero-beta-D-manno-heptose 7-phosphate + ATP = D-glycero-beta-D-manno-heptose 1,7-bisphosphate + ADP + H(+). The catalysed reaction is D-glycero-beta-D-manno-heptose 1-phosphate + ATP + H(+) = ADP-D-glycero-beta-D-manno-heptose + diphosphate. The protein operates within nucleotide-sugar biosynthesis; ADP-L-glycero-beta-D-manno-heptose biosynthesis; ADP-L-glycero-beta-D-manno-heptose from D-glycero-beta-D-manno-heptose 7-phosphate: step 1/4. It participates in nucleotide-sugar biosynthesis; ADP-L-glycero-beta-D-manno-heptose biosynthesis; ADP-L-glycero-beta-D-manno-heptose from D-glycero-beta-D-manno-heptose 7-phosphate: step 3/4. Its function is as follows. Catalyzes the phosphorylation of D-glycero-D-manno-heptose 7-phosphate at the C-1 position to selectively form D-glycero-beta-D-manno-heptose-1,7-bisphosphate. Functionally, catalyzes the ADP transfer from ATP to D-glycero-beta-D-manno-heptose 1-phosphate, yielding ADP-D-glycero-beta-D-manno-heptose. This Nitrobacter hamburgensis (strain DSM 10229 / NCIMB 13809 / X14) protein is Bifunctional protein HldE.